Here is a 978-residue protein sequence, read N- to C-terminus: LRR receptor-like serine/threonine-protein kinase ER1 (978 aa).

A signal peptide spans 1 to 24 (MTPAPAAASYRALVALLLVAVAVA). At 25–577 (DDGSTLLEIK…GHQQKPLISK (553 aa)) the chain is on the extracellular side. N-linked (GlcNAc...) asparagine glycans are attached at residues asparagine 62 and asparagine 71. LRR repeat units lie at residues 66 to 87 (AVAALNLSGLNLGGEISPAVGR), 88 to 112 (LKGIVSIDLKSNGLSGQIPDEIGDC), 114 to 136 (SLKTLDLSFNSLDGDIPFSVSKL), 137 to 159 (KHIESLILKNNQLIGVIPSTLSQ), 160 to 184 (LPNLKILDLAQNKLSGEIPRLIYWN), 186 to 208 (VLQYLGLRGNNLEGSISPDICQL), 209 to 232 (TGLWYFDVKNNSLTGPIPETIGNC), 233 to 257 (TSFQVLDLSYNKLSGSIPFNIGFLQ), 259 to 278 (ATLSLQGNMFTGPIPSVIGL), 279 to 302 (MQALAVLDLSYNQLSGPIPSILGN), 304 to 327 (TYTEKLYMQGNKLTGPIPPELGNM), 328 to 350 (STLHYLELNDNQLSGFIPPEFGK), 352 to 375 (TGLFDLNLANNNFEGPIPDNISSC), 377 to 399 (NLNSFNAYGNRLNGTIPPSLHKL), 400 to 423 (ESMTYLNLSSNFLSGSIPIELSRI), 424 to 447 (NNLDTLDLSCNMITGPIPSTIGSL), 449 to 470 (HLLRLNLSNNGLVGFIPAEIGN), 471 to 494 (LRSIMEIDMSNNHLGGLIPQELGM), 496 to 518 (QNLMLLNLKNNNITGDVSSLMNC), and 519 to 543 (FSLNILNVSYNNLAGVVPTDNNFSR). Asparagine 218 and asparagine 231 each carry an N-linked (GlcNAc...) asparagine glycan. 2 N-linked (GlcNAc...) asparagine glycosylation sites follow: asparagine 302 and asparagine 326. N-linked (GlcNAc...) asparagine glycans are attached at residues asparagine 371, asparagine 389, and asparagine 406. An N-linked (GlcNAc...) asparagine glycan is attached at asparagine 454. N-linked (GlcNAc...) asparagine glycosylation is found at asparagine 507, asparagine 525, and asparagine 540. Residues 578–598 (AAILGIAVGGLVILLMILVAV) form a helical membrane-spanning segment. Over 599 to 978 (CRPHSPPVFK…FGEVISQNTE (380 aa)) the chain is Cytoplasmic. One can recognise a Protein kinase domain in the interval 645 to 916 (LSEKYIIGYG…EVVRVLDCLV (272 aa)). Residues 651–659 (IGYGASSTV) and lysine 673 each bind ATP. The active-site Proton acceptor is the aspartate 771.

Belongs to the protein kinase superfamily. Ser/Thr protein kinase family.

The protein resides in the cell membrane. It catalyses the reaction L-seryl-[protein] + ATP = O-phospho-L-seryl-[protein] + ADP + H(+). It carries out the reaction L-threonyl-[protein] + ATP = O-phospho-L-threonyl-[protein] + ADP + H(+). In terms of biological role, receptor kinase involved in the regulation of thermotolerance. Functions as a positive regulator of heat tolerance. May be involved in the regulation of cell proliferation and cell growth. This is LRR receptor-like serine/threonine-protein kinase ER1 from Oryza sativa subsp. japonica (Rice).